The following is a 334-amino-acid chain: Malate dehydrogenase 2 (334 aa).

19–25 (IGAGKVG) provides a ligand contact to NAD(+). Residues R100 and R106 each contribute to the substrate site. NAD(+) contacts are provided by residues N113 and 136–138 (VSN). The substrate site is built by N138 and R169. H193 (proton acceptor) is an active-site residue.

The protein belongs to the LDH/MDH superfamily.

The enzyme catalyses (S)-malate + NAD(+) = oxaloacetate + NADH + H(+). Functionally, catalyzes the reversible oxidation of malate to oxaloacetate. The protein is Malate dehydrogenase 2 of Aquifex aeolicus (strain VF5).